A 707-amino-acid polypeptide reads, in one-letter code: Elongation factor G (707 aa).

In terms of domain architecture, tr-type G spans 8 to 294 (ERYRNFGIIA…GVVDYLPSPL (287 aa)). GTP is bound by residues 17-24 (AHIDAGKT), 92-96 (DTPGH), and 146-149 (NKMD).

It belongs to the TRAFAC class translation factor GTPase superfamily. Classic translation factor GTPase family. EF-G/EF-2 subfamily.

The protein resides in the cytoplasm. In terms of biological role, catalyzes the GTP-dependent ribosomal translocation step during translation elongation. During this step, the ribosome changes from the pre-translocational (PRE) to the post-translocational (POST) state as the newly formed A-site-bound peptidyl-tRNA and P-site-bound deacylated tRNA move to the P and E sites, respectively. Catalyzes the coordinated movement of the two tRNA molecules, the mRNA and conformational changes in the ribosome. The sequence is that of Elongation factor G from Hyphomonas neptunium (strain ATCC 15444).